Consider the following 1669-residue polypeptide: MGPRLSVWLLLLFAALLLHEERSRAAAKGDCGGSGCGKCDCHGVKGQKGERGLPGLQGVIGFPGMQGPEGPHGPPGQKGDAGEPGLPGTKGTRGPPGAAGYPGNPGLPGIPGQDGPPGPPGIPGCNGTKGERGPLGPPGLPGFSGNPGPPGLPGMKGDPGEILGHVPGTLLKGERGFPGIPGMPGSPGLPGLQGPVGPPGFTGPPGPPGPPGPPGEKGQMGSSFQGPKGDKGEQGVSGPPGVPGQAQVKEKGDFAPTGEKGQKGEPGFPGVPGYGEKGEPGKQGPRGKPGKDGEKGERGSPGIPGDSGYPGLPGRQGPQGEKGEAGLPGPPGTVIGTMPLGEKGDRGYPGAPGLRGEPGPKGFPGTPGQPGPPGFPTPGQAGAPGFPGERGEKGDQGFPGVSLPGPSGRDGAPGPPGPPGPPGQPGHTNGIVECQPGPPGDQGPPGTPGQPGLTGEVGQKGQKGESCLACDTEGLRGPPGPQGPPGEIGFPGQPGAKGDRGLPGRDGLEGLPGPQGSPGLIGQPGAKGEPGEIFFDMRLKGDKGDPGFPGQPGMPGRAGTPGRDGHPGLPGPKGSPGSIGLKGERGPPGGVGFPGSRGDIGPPGPPGVGPIGPVGEKGQAGFPGGPGSPGLPGPKGEAGKVVPLPGPPGAAGLPGSPGFPGPQGDRGFPGTPGRPGIPGEKGAVGQPGIGFPGLPGPKGVDGLPGEIGRPGSPGRPGFNGLPGNPGPQGQKGEPGIGLPGLKGQPGLPGIPGTPGEKGSIGGPGVPGEQGLTGPPGLQGIRGDPGPPGVQGPAGPPGVPGIGPPGAMGPPGGQGPPGSSGPPGIKGEKGFPGFPGLDMPGPKGDKGSQGLPGLTGQSGLPGLPGQQGTPGVPGFPGSKGEMGVMGTPGQPGSPGPAGTPGLPGEKGDHGLPGSSGPRGDPGFKGDKGDVGLPGMPGSMEHVDMGSMKGQKGDQGEKGQIGPTGDKGSRGDPGTPGVPGKDGQAGHPGQPGPKGDPGLSGTPGSPGLPGPKGSVGGMGLPGSPGEKGVPGIPGSQGVPGSPGEKGAKGEKGQSGLPGIGIPGRPGDKGDQGLAGFPGSPGEKGEKGSAGTPGMPGSPGPRGSPGNIGHPGSPGLPGEKGDKGLPGLDGVPGVKGEAGLPGTPGPTGPAGQKGEPGSDGIPGSAGEKGEQGVPGRGFPGFPGSKGDKGSKGEVGFPGLAGSPGIPGVKGEQGFMGPPGPQGQPGLPGTPGHPVEGPKGDRGPQGQPGLPGHPGPMGPPGFPGINGPKGDKGNQGWPGAPGVPGPKGDPGFQGMPGIGGSPGITGSKGDMGLPGVPGFQGQKGLPGLQGVKGDQGDQGVPGPKGLQGPPGPPGPYDVIKGEPGLPGPEGPPGLKGLQGPPGPKGQQGVTGSVGLPGPPGVPGFDGAPGQKGETGPFGPPGPRGFPGPPGPDGLPGSMGPPGTPSVDHGFLVTRHSQTTDDPLCPPGTKILYHGYSLLYVQGNERAHGQDLGTAGSCLRKFSTMPFLFCNINNVCNFASRNDYSYWLSTPEPMPMSMAPISGDNIRPFISRCAVCEAPAMVMAVHSQTIQIPQCPNGWSSLWIGYSFVMHTSAGAEGSGQALASPGSCLEEFRSAPFIECHGRGTCNYYANAYSFWLATIERSEMFKKPTPSTLKAGELRTHVSRCQVCMRRT.

Residues 1 to 27 form the signal peptide; that stretch reads MGPRLSVWLLLLFAALLLHEERSRAAA. A propeptide spans 28 to 172 (N-terminal propeptide (7S domain)); that stretch reads KGDCGGSGCG…LGHVPGTLLK (145 aa). Residues 47-1443 are disordered; the sequence is QKGERGLPGL…MGPPGTPSVD (1397 aa). The segment covering 92–104 has biased composition (low complexity); that stretch reads TRGPPGAAGYPGN. N-linked (GlcNAc...) asparagine glycosylation occurs at asparagine 126. Residues 173–1440 are triple-helical region; that stretch reads GERGFPGIPG…PGSMGPPGTP (1268 aa). A compositionally biased stretch (pro residues) spans 196–214; that stretch reads VGPPGFTGPPGPPGPPGPP. 3-hydroxyproline is present on residues proline 204, proline 207, and proline 210. A compositionally biased stretch (low complexity) spans 234–247; it reads QGVSGPPGVPGQAQ. Over residues 289–298 the composition is skewed to basic and acidic residues; that stretch reads PGKDGEKGER. Residues 367–376 show a composition bias toward pro residues; the sequence is PGQPGPPGFP. Positions 377–387 are enriched in low complexity; that stretch reads TPGQAGAPGFP. Pro residues-rich tracts occupy residues 413–424 and 436–448; these read PGPPGPPGPPGQ and PGPPGDQGPPGTP. Residues 485–494 are compositionally biased toward low complexity; the sequence is PGEIGFPGQP. Composition is skewed to basic and acidic residues over residues 497–508 and 535–545; these read KGDRGLPGRDGL and FDMRLKGDKGD. Residues 586–595 are compositionally biased toward gly residues; sequence GPPGGVGFPG. 3-hydroxyproline is present on residues proline 587 and proline 602. Position 603 is a 4-hydroxyproline (proline 603). Position 605 is a 3-hydroxyproline (proline 605). Residue proline 606 is modified to 4-hydroxyproline. The span at 611 to 620 shows a compositional bias: low complexity; the sequence is IGPVGEKGQA. Over residues 621–630 the composition is skewed to gly residues; the sequence is GFPGGPGSPG. 4-hydroxyproline occurs at positions 623, 626, 629, and 632. Proline 647 is subject to 3-hydroxyproline. Low complexity predominate over residues 715–731; that stretch reads RPGFNGLPGNPGPQGQK. Positions 758–767 are enriched in gly residues; that stretch reads GSIGGPGVPG. Residues 784 to 802 show a composition bias toward pro residues; sequence PGPPGVQGPAGPPGVPGIG. Over residues 803–817 the composition is skewed to gly residues; that stretch reads PPGAMGPPGGQGPPG. Low complexity-rich tracts occupy residues 847-875 and 994-1003; these read SQGLPGLTGQSGLPGLPGQQGTPGVPGFP and DPGLSGTPGS. A compositionally biased stretch (gly residues) spans 1011–1020; it reads GSVGGMGLPG. Position 1214 is a 3-hydroxyproline (proline 1214). Residues 1220-1230 show a composition bias toward low complexity; sequence QPGLPGTPGHP. Over residues 1247-1258 the composition is skewed to pro residues; sequence PGHPGPMGPPGF. Gly residues predominate over residues 1290 to 1299; that stretch reads GMPGIGGSPG. Composition is skewed to low complexity over residues 1333–1343, 1368–1391, and 1398–1412; these read DQGVPGPKGLQ, PGLKGLQGPPGPKGQQGVTGSVGL, and PGFDGAPGQKGETGP. The span at 1413–1428 shows a compositional bias: pro residues; the sequence is FGPPGPRGFPGPPGPD. Position 1424 is a 3-hydroxyproline (proline 1424). Residues 1445–1669 form the Collagen IV NC1 domain; that stretch reads GFLVTRHSQT…SRCQVCMRRT (225 aa). Cystine bridges form between cysteine 1460/cysteine 1551, cysteine 1493/cysteine 1548, cysteine 1505/cysteine 1511, cysteine 1570/cysteine 1665, cysteine 1604/cysteine 1662, and cysteine 1616/cysteine 1622. An S-Lysyl-methionine sulfilimine (Met-Lys) (interchain with K-1651) cross-link involves residue methionine 1533. Residue lysine 1651 forms an S-Lysyl-methionine sulfilimine (Lys-Met) (interchain with M-1533) linkage.

It belongs to the type IV collagen family. There are six type IV collagen isoforms, alpha 1(IV)-alpha 6(IV), each of which can form a triple helix structure with 2 other chains to generate type IV collagen network. Interacts with EFEMP2. Post-translationally, lysines at the third position of the tripeptide repeating unit (G-X-Y) are hydroxylated. The modified lysines can be O-glycosylated. Contains 4-hydroxyproline. Prolines at the third position of the tripeptide repeating unit (G-X-Y) are hydroxylated in some or all of the chains. In terms of processing, contains 3-hydroxyproline. This modification occurs on the first proline residue in the sequence motif Gly-Pro-Hyp, where Hyp is 4-hydroxyproline. Post-translationally, type IV collagens contain numerous cysteine residues which are involved in inter- and intramolecular disulfide bonding. 12 of these, located in the NC1 domain, are conserved in all known type IV collagens. The trimeric structure of the NC1 domains is stabilized by covalent bonds (sulfilimine cross-links) between Lys and Met residues. These cross-links are important for the mechanical stability of the basement membrane. Sulfilimine cross-link is catalyzed by PXDN. In terms of processing, proteolytic processing produces the C-terminal NC1 peptide, arresten. As to expression, detected in the basement membrane of the cornea (at protein level).

Its subcellular location is the secreted. The protein resides in the extracellular space. It localises to the extracellular matrix. It is found in the basement membrane. In terms of biological role, type IV collagen is the major structural component of glomerular basement membranes (GBM), forming a 'chicken-wire' meshwork together with laminins, proteoglycans and entactin/nidogen. Arresten, comprising the C-terminal NC1 domain, inhibits angiogenesis and tumor formation. The C-terminal half is found to possess the anti-angiogenic activity. Specifically inhibits endothelial cell proliferation, migration and tube formation. This is Collagen alpha-1(IV) chain from Mus musculus (Mouse).